A 431-amino-acid polypeptide reads, in one-letter code: Serine--tRNA ligase (431 aa).

236–238 (TAE) serves as a coordination point for L-serine. 267–269 (RSE) lines the ATP pocket. Residue Glu290 coordinates L-serine. Position 354 to 357 (354 to 357 (EISS)) interacts with ATP. Ser389 serves as a coordination point for L-serine.

It belongs to the class-II aminoacyl-tRNA synthetase family. Type-1 seryl-tRNA synthetase subfamily. Homodimer. The tRNA molecule binds across the dimer.

It localises to the cytoplasm. It catalyses the reaction tRNA(Ser) + L-serine + ATP = L-seryl-tRNA(Ser) + AMP + diphosphate + H(+). It carries out the reaction tRNA(Sec) + L-serine + ATP = L-seryl-tRNA(Sec) + AMP + diphosphate + H(+). It functions in the pathway aminoacyl-tRNA biosynthesis; selenocysteinyl-tRNA(Sec) biosynthesis; L-seryl-tRNA(Sec) from L-serine and tRNA(Sec): step 1/1. In terms of biological role, catalyzes the attachment of serine to tRNA(Ser). Is also able to aminoacylate tRNA(Sec) with serine, to form the misacylated tRNA L-seryl-tRNA(Sec), which will be further converted into selenocysteinyl-tRNA(Sec). The chain is Serine--tRNA ligase from Herminiimonas arsenicoxydans.